Here is a 202-residue protein sequence, read N- to C-terminus: MSRRLDLDALDLSTKTIPAQAAIGTYMSSTIIKAPASSVWQAVNDTDSWPIWNTFCPGATIREQPDTTKSRSGRLQLGTKMTLHLNWNPRGTKPKQMDVGLVVTEFDPPIKGRETPGRIAWATDSSAKGFPSWLLYAERVTELHESEEWDGEECQSVTQVLSWESQRGPLAYVVRWFMGKNFKMCLRVQADDMTSFVEGQKL.

Its function is as follows. Part of the gene cluster that mediates the biosynthesis of oxopyrrolidines, polyketide-amino acid hybrid compounds with feature structures of tetramic acid. Does not seem to play a role in oxopyrrolidines A and B biosynthesis. This Penicillium oxalicum (strain 114-2 / CGMCC 5302) (Penicillium decumbens) protein is Oxopyrrolidines biosynthesis cluster protein O.